The primary structure comprises 341 residues: MPKPSVGINGFGRIGRLVLRAAVEKDSVNVVAVNDPFISIDYMVYLFQYDSTHGRFKGTVAHEGDYLLVAKEGKSQHKIKVYNSRDPAEIQWGASGADYVVESTGVFTTIEKANAHLKGGAKKVIISAPSADAPMFVVGVNHEKYDHANDHIISNASCTTNCLAPLAKVINDNFGIIEGLMTTVHAVTATQKTVDGPSGKLWRDGRGAGQNIIPASTGAAKAVGKVIPELNGKLTGMAFRVPTPDVSVVDLTARLEKPASLDDIKKVIKAAADGPMKGILAYTEDQVVSTDFVSDTNSSIFDAGASISLNPHFVKLVSWYDNEFGYSNRVVDLISYIATKA.

NAD(+)-binding positions include 13–14 (RI), D35, and R85. D-glyceraldehyde 3-phosphate-binding positions include 157 to 159 (SCT), T188, 217 to 218 (TG), and R240. The active-site Nucleophile is the C158. Residue N322 coordinates NAD(+).

It belongs to the glyceraldehyde-3-phosphate dehydrogenase family. In terms of assembly, homotetramer.

It is found in the cytoplasm. The catalysed reaction is D-glyceraldehyde 3-phosphate + phosphate + NAD(+) = (2R)-3-phospho-glyceroyl phosphate + NADH + H(+). It functions in the pathway carbohydrate degradation; glycolysis; pyruvate from D-glyceraldehyde 3-phosphate: step 1/5. The chain is Glyceraldehyde-3-phosphate dehydrogenase 2 (gpd-2) from Caenorhabditis elegans.